The chain runs to 67 residues: Large ribosomal subunit protein bL31 (67 aa).

This sequence belongs to the bacterial ribosomal protein bL31 family. Type A subfamily. As to quaternary structure, part of the 50S ribosomal subunit.

Binds the 23S rRNA. This Wolinella succinogenes (strain ATCC 29543 / DSM 1740 / CCUG 13145 / JCM 31913 / LMG 7466 / NCTC 11488 / FDC 602W) (Vibrio succinogenes) protein is Large ribosomal subunit protein bL31.